Reading from the N-terminus, the 221-residue chain is Large ribosomal subunit protein uL4 (221 aa).

Residues 44-102 are disordered; that stretch reads AARQGTHKVKRRGEVRGGGKKPYRQKGTGRARQGSTRAPQFAGGGVVHGPTPRDYSQRT. Residues 61 to 72 are compositionally biased toward basic residues; it reads GGKKPYRQKGTG.

It belongs to the universal ribosomal protein uL4 family. As to quaternary structure, part of the 50S ribosomal subunit.

One of the primary rRNA binding proteins, this protein initially binds near the 5'-end of the 23S rRNA. It is important during the early stages of 50S assembly. It makes multiple contacts with different domains of the 23S rRNA in the assembled 50S subunit and ribosome. In terms of biological role, forms part of the polypeptide exit tunnel. This chain is Large ribosomal subunit protein uL4, found in Streptomyces avermitilis (strain ATCC 31267 / DSM 46492 / JCM 5070 / NBRC 14893 / NCIMB 12804 / NRRL 8165 / MA-4680).